A 269-amino-acid chain; its full sequence is MLQIPPENVWIALAVTLAAGLATAIGSLLVLFSRRPNPRLLAFGLAFAGGAMVYVSLSEILNKSIASFALAYGERTGFTYGTLAFLAGVIVIVLIDHFIPNPHDSLDKQDPAFRENSREYLKRVALLTSVAITAHNFPEGLATFFATLESPSVGMPLAFAIAIHNIPEGIAIAVPVYFATQNKFYAFSASLLSGLAEPVGAALGYWLLSGSLSHATFGWVFGLIAGVMVFLALDELLPAAKRYAKGHETVYGLVAGMGTLAISLVLFKW.

The next 8 membrane-spanning stretches (helical) occupy residues 11 to 31, 40 to 60, 80 to 100, 125 to 145, 158 to 178, 187 to 207, 217 to 237, and 249 to 269; these read IALAVTLAAGLATAIGSLLVL, LLAFGLAFAGGAMVYVSLSEI, YGTLAFLAGVIVIVLIDHFIP, ALLTSVAITAHNFPEGLATFF, AFAIAIHNIPEGIAIAVPVYF, FSASLLSGLAEPVGAALGYWL, FGWVFGLIAGVMVFLALDELL, and TVYGLVAGMGTLAISLVLFKW. Residues Asn136 and Glu139 each contribute to the Fe(2+) site. Positions 139 and 164 each coordinate Zn(2+). Fe(2+) is bound by residues Asn165, Glu168, and Glu197. Glu168 contributes to the Zn(2+) binding site.

It belongs to the ZIP transporter (TC 2.A.5) family. ZupT subfamily.

The protein resides in the cell inner membrane. The catalysed reaction is Zn(2+)(in) = Zn(2+)(out). In terms of biological role, mediates zinc uptake. May also transport other divalent cations. This is Zinc transporter ZupT from Stenotrophomonas maltophilia (strain K279a).